We begin with the raw amino-acid sequence, 484 residues long: Poly(A) RNA polymerase GLD2 (484 aa).

Residues Ser62 and Ser69 each carry the phosphoserine modification. The Nuclear localization signal signature appears at 76–92 (KRLSDEKNLPLDGKRQR). A Phosphoserine modification is found at Ser95. The Mg(2+) site is built by Asp213 and Asp215. The PAP-associated domain occupies 386 to 440 (NLGDLLLGFLKYYATEFDWNSQMISVREAKAIPRPDGIEWRNKYICVEEPFDGTN).

It belongs to the DNA polymerase type-B-like family. GLD2 subfamily. In terms of assembly, interacts with CPEB1, CPEB2, CPSF1 and PABPC1. Interacts with QKI isoform QKI7; promoting recruitment to miRNA miR-122 and miR-122 stabilization. Mg(2+) is required as a cofactor. The cofactor is Mn(2+).

Its subcellular location is the cytoplasm. It localises to the nucleus. It carries out the reaction RNA(n) + ATP = RNA(n)-3'-adenine ribonucleotide + diphosphate. Functionally, cytoplasmic poly(A) RNA polymerase that adds successive AMP monomers to the 3'-end of specific RNAs, forming a poly(A) tail. In contrast to the canonical nuclear poly(A) RNA polymerase, it only adds poly(A) to selected cytoplasmic mRNAs. Does not play a role in replication-dependent histone mRNA degradation. Adds a single nucleotide to the 3' end of specific miRNAs, monoadenylation stabilizes and prolongs the activity of some but not all miRNAs. This Bos taurus (Bovine) protein is Poly(A) RNA polymerase GLD2.